Reading from the N-terminus, the 495-residue chain is MTFPGDTAVLVLAAGPGTRMRSDTPKVLHTLAGRSMLSHVLHAIAKLAPQRLIVVLGHDHQRIAPLVGELADTLGRTIDVALQDRPLGTGHAVLCGLSALPDDYAGNVVVTSGDTPLLDADTLADLIATHRAVSAAVTVLTTTLDDPFGYGRILRTQDHEVMAIVEQTDATPSQREIREVNAGVYAFDIAALRSALSRLSSNNAQQELYLTDVIAILRSDGQTVHASHVDDSALVAGVNNRVQLAELASELNRRVVAAHQLAGVTVVDPATTWIDVDVTIGRDTVIHPGTQLLGRTQIGGRCVVGPDTTLTDVAVGDGASVVRTHGSSSSIGDGAAVGPFTYLRPGTALGADGKLGAFVEVKNSTIGTGTKVPHLTYVGDADIGEYSNIGASSVFVNYDGTSKRRTTVGSHVRTGSDTMFVAPVTIGDGAYTGAGTVVREDVPPGALAVSAGPQRNIENWVQRKRPGSPAAQASKRASEMACQQPTQPPDADQTP.

Residues 1 to 241 (MTFPGDTAVL…SALVAGVNNR (241 aa)) form a pyrophosphorylase region. Residues 12–15 (LAAG), Lys-26, Gln-83, 88–89 (GT), 112–114 (SGD), Gly-151, Glu-166, Asn-181, and Asn-239 each bind UDP-N-acetyl-alpha-D-glucosamine. Position 114 (Asp-114) interacts with Mg(2+). Residue Asn-239 participates in Mg(2+) binding. The interval 242–262 (VQLAELASELNRRVVAAHQLA) is linker. The N-acetyltransferase stretch occupies residues 263–495 (GVTVVDPATT…TQPPDADQTP (233 aa)). Residues Arg-344 and Lys-362 each coordinate UDP-N-acetyl-alpha-D-glucosamine. Residue His-374 is the Proton acceptor of the active site. Tyr-377 and Asn-388 together coordinate UDP-N-acetyl-alpha-D-glucosamine. Acetyl-CoA is bound by residues Ala-391, 397 to 398 (NY), Ser-416, and Ala-434. The interval 457–495 (IENWVQRKRPGSPAAQASKRASEMACQQPTQPPDADQTP) is disordered. The segment covering 483–495 (QQPTQPPDADQTP) has biased composition (low complexity).

This sequence in the N-terminal section; belongs to the N-acetylglucosamine-1-phosphate uridyltransferase family. It in the C-terminal section; belongs to the transferase hexapeptide repeat family. In terms of assembly, homotrimer. It depends on Mg(2+) as a cofactor.

It is found in the cytoplasm. The catalysed reaction is alpha-D-glucosamine 1-phosphate + acetyl-CoA = N-acetyl-alpha-D-glucosamine 1-phosphate + CoA + H(+). The enzyme catalyses N-acetyl-alpha-D-glucosamine 1-phosphate + UTP + H(+) = UDP-N-acetyl-alpha-D-glucosamine + diphosphate. It participates in nucleotide-sugar biosynthesis; UDP-N-acetyl-alpha-D-glucosamine biosynthesis; N-acetyl-alpha-D-glucosamine 1-phosphate from alpha-D-glucosamine 6-phosphate (route II): step 2/2. Its pathway is nucleotide-sugar biosynthesis; UDP-N-acetyl-alpha-D-glucosamine biosynthesis; UDP-N-acetyl-alpha-D-glucosamine from N-acetyl-alpha-D-glucosamine 1-phosphate: step 1/1. It functions in the pathway bacterial outer membrane biogenesis; LPS lipid A biosynthesis. In terms of biological role, catalyzes the last two sequential reactions in the de novo biosynthetic pathway for UDP-N-acetylglucosamine (UDP-GlcNAc). The C-terminal domain catalyzes the transfer of acetyl group from acetyl coenzyme A to glucosamine-1-phosphate (GlcN-1-P) to produce N-acetylglucosamine-1-phosphate (GlcNAc-1-P), which is converted into UDP-GlcNAc by the transfer of uridine 5-monophosphate (from uridine 5-triphosphate), a reaction catalyzed by the N-terminal domain. This is Bifunctional protein GlmU from Mycobacterium tuberculosis (strain ATCC 25177 / H37Ra).